The chain runs to 353 residues: Protein RecA (353 aa).

Residue 65–72 coordinates ATP; sequence GPESSGKT.

The protein belongs to the RecA family.

The protein localises to the cytoplasm. Functionally, can catalyze the hydrolysis of ATP in the presence of single-stranded DNA, the ATP-dependent uptake of single-stranded DNA by duplex DNA, and the ATP-dependent hybridization of homologous single-stranded DNAs. It interacts with LexA causing its activation and leading to its autocatalytic cleavage. The chain is Protein RecA from Aeromonas salmonicida (strain A449).